A 96-amino-acid chain; its full sequence is UPF0729 protein AGAP000931 (96 aa).

Positions 65-96 (VPPGHDPVGPTVAADTATSDAVDDAASSKKTL) are disordered. A compositionally biased stretch (low complexity) spans 75-96 (TVAADTATSDAVDDAASSKKTL).

The protein belongs to the UPF0729 family.

The protein is UPF0729 protein AGAP000931 of Anopheles gambiae (African malaria mosquito).